A 338-amino-acid polypeptide reads, in one-letter code: Ketol-acid reductoisomerase (NADP(+)) (338 aa).

Positions methionine 1 to threonine 181 constitute a KARI N-terminal Rossmann domain. Residues tyrosine 24–glutamine 27, arginine 47, serine 50, serine 52, and aspartate 82–glutamine 85 contribute to the NADP(+) site. Histidine 107 is a catalytic residue. Residue glycine 133 coordinates NADP(+). A KARI C-terminal knotted domain is found at alanine 182 to isoleucine 327. Mg(2+)-binding residues include aspartate 190, glutamate 194, glutamate 226, and glutamate 230. Serine 251 serves as a coordination point for substrate.

This sequence belongs to the ketol-acid reductoisomerase family. Mg(2+) is required as a cofactor.

The catalysed reaction is (2R)-2,3-dihydroxy-3-methylbutanoate + NADP(+) = (2S)-2-acetolactate + NADPH + H(+). The enzyme catalyses (2R,3R)-2,3-dihydroxy-3-methylpentanoate + NADP(+) = (S)-2-ethyl-2-hydroxy-3-oxobutanoate + NADPH + H(+). The protein operates within amino-acid biosynthesis; L-isoleucine biosynthesis; L-isoleucine from 2-oxobutanoate: step 2/4. It participates in amino-acid biosynthesis; L-valine biosynthesis; L-valine from pyruvate: step 2/4. In terms of biological role, involved in the biosynthesis of branched-chain amino acids (BCAA). Catalyzes an alkyl-migration followed by a ketol-acid reduction of (S)-2-acetolactate (S2AL) to yield (R)-2,3-dihydroxy-isovalerate. In the isomerase reaction, S2AL is rearranged via a Mg-dependent methyl migration to produce 3-hydroxy-3-methyl-2-ketobutyrate (HMKB). In the reductase reaction, this 2-ketoacid undergoes a metal-dependent reduction by NADPH to yield (R)-2,3-dihydroxy-isovalerate. This Nitrosococcus oceani (strain ATCC 19707 / BCRC 17464 / JCM 30415 / NCIMB 11848 / C-107) protein is Ketol-acid reductoisomerase (NADP(+)).